The following is a 440-amino-acid chain: Tyrosine--tRNA ligase (440 aa).

Residue Tyr-46 participates in L-tyrosine binding. A 'HIGH' region motif is present at residues 51 to 60 (PTAASLHIGN). Residues Tyr-181 and Gln-185 each contribute to the L-tyrosine site. Residues 241 to 245 (KFGKS) carry the 'KMSKS' region motif. Lys-244 lines the ATP pocket. The region spanning 373–439 (DRVIDAAQAA…GKKALGAVEN (67 aa)) is the S4 RNA-binding domain.

The protein belongs to the class-I aminoacyl-tRNA synthetase family. TyrS type 1 subfamily. In terms of assembly, homodimer.

The protein localises to the cytoplasm. The enzyme catalyses tRNA(Tyr) + L-tyrosine + ATP = L-tyrosyl-tRNA(Tyr) + AMP + diphosphate + H(+). Its function is as follows. Catalyzes the attachment of tyrosine to tRNA(Tyr) in a two-step reaction: tyrosine is first activated by ATP to form Tyr-AMP and then transferred to the acceptor end of tRNA(Tyr). The protein is Tyrosine--tRNA ligase of Bifidobacterium longum (strain NCC 2705).